The following is a 92-amino-acid chain: Small ribosomal subunit protein uS19 (92 aa).

It belongs to the universal ribosomal protein uS19 family.

In terms of biological role, protein S19 forms a complex with S13 that binds strongly to the 16S ribosomal RNA. The chain is Small ribosomal subunit protein uS19 from Acaryochloris marina (strain MBIC 11017).